The primary structure comprises 632 residues: Pescadillo homolog (632 aa).

Residues G306–V341 form a disordered region. Residues D307 to F328 are compositionally biased toward acidic residues. The BRCT domain occupies R361–P459. Disordered regions lie at residues G485–S535, T565–L585, and M601–A632. The segment covering Q492–K516 has biased composition (acidic residues). The span at A521 to A531 shows a compositional bias: low complexity. Basic and acidic residues-rich tracts occupy residues Q576–L585 and N605–E616. A coiled-coil region spans residues A595–A632.

The protein belongs to the pescadillo family. Component of the NOP7 complex, composed of ERB1, NOP7 and YTM1. The complex is held together by ERB1, which interacts with NOP7 via its N-terminal domain and with YTM1 via a high-affinity interaction between the seven-bladed beta-propeller domains of the 2 proteins. The NOP7 complex associates with the 66S pre-ribosome.

The protein localises to the nucleus. It localises to the nucleolus. The protein resides in the nucleoplasm. In terms of biological role, component of the NOP7 complex, which is required for maturation of the 25S and 5.8S ribosomal RNAs and formation of the 60S ribosome. The sequence is that of Pescadillo homolog from Cryptococcus neoformans var. neoformans serotype D (strain B-3501A) (Filobasidiella neoformans).